A 260-amino-acid polypeptide reads, in one-letter code: Triosephosphate isomerase (260 aa).

A substrate-binding site is contributed by 11–13; the sequence is NWK. Catalysis depends on His-103, which acts as the Electrophile. The Proton acceptor role is filled by Glu-175. Residues Gly-181, Ser-220, and 241–242 each bind substrate; that span reads GG.

The protein belongs to the triosephosphate isomerase family. Homodimer.

The protein resides in the cytoplasm. The catalysed reaction is D-glyceraldehyde 3-phosphate = dihydroxyacetone phosphate. It functions in the pathway carbohydrate biosynthesis; gluconeogenesis. The protein operates within carbohydrate degradation; glycolysis; D-glyceraldehyde 3-phosphate from glycerone phosphate: step 1/1. Its function is as follows. Involved in the gluconeogenesis. Catalyzes stereospecifically the conversion of dihydroxyacetone phosphate (DHAP) to D-glyceraldehyde-3-phosphate (G3P). The chain is Triosephosphate isomerase from Shewanella amazonensis (strain ATCC BAA-1098 / SB2B).